The primary structure comprises 147 residues: D-aminoacyl-tRNA deacylase (147 aa).

The Gly-cisPro motif, important for rejection of L-amino acids signature appears at 136–137 (GP).

It belongs to the DTD family. Homodimer.

The protein resides in the cytoplasm. The catalysed reaction is glycyl-tRNA(Ala) + H2O = tRNA(Ala) + glycine + H(+). The enzyme catalyses a D-aminoacyl-tRNA + H2O = a tRNA + a D-alpha-amino acid + H(+). In terms of biological role, an aminoacyl-tRNA editing enzyme that deacylates mischarged D-aminoacyl-tRNAs. Also deacylates mischarged glycyl-tRNA(Ala), protecting cells against glycine mischarging by AlaRS. Acts via tRNA-based rather than protein-based catalysis; rejects L-amino acids rather than detecting D-amino acids in the active site. By recycling D-aminoacyl-tRNA to D-amino acids and free tRNA molecules, this enzyme counteracts the toxicity associated with the formation of D-aminoacyl-tRNA entities in vivo and helps enforce protein L-homochirality. This chain is D-aminoacyl-tRNA deacylase, found in Streptococcus suis (strain 98HAH33).